Consider the following 199-residue polypeptide: 3-isopropylmalate dehydratase small subunit (199 aa).

This sequence belongs to the LeuD family. LeuD type 1 subfamily. In terms of assembly, heterodimer of LeuC and LeuD.

The catalysed reaction is (2R,3S)-3-isopropylmalate = (2S)-2-isopropylmalate. The protein operates within amino-acid biosynthesis; L-leucine biosynthesis; L-leucine from 3-methyl-2-oxobutanoate: step 2/4. Its function is as follows. Catalyzes the isomerization between 2-isopropylmalate and 3-isopropylmalate, via the formation of 2-isopropylmaleate. The protein is 3-isopropylmalate dehydratase small subunit of Tolumonas auensis (strain DSM 9187 / NBRC 110442 / TA 4).